The sequence spans 315 residues: Protein MFI (315 aa).

In terms of assembly, can homodimerize. Interacts with MFF; the interaction inhibits MFF interaction with DNM1L. In terms of tissue distribution, enriched in the pancreatic beta cell and the testis and is expressed at low levels in other tissues tested.

Its subcellular location is the cytoplasm. The protein resides in the cytosol. It is found in the mitochondrion outer membrane. Acts as an inhibitor of mitochondrial fission. Interacts with MFF and prevents DNM1L recruitment to mitochondria, promoting a more fused mitochondrial network. In Mus musculus (Mouse), this protein is Protein MFI.